Here is a 142-residue protein sequence, read N- to C-terminus: Cell wall-binding protein YqgA (142 aa).

A signal peptide spans 1–28; that stretch reads MKQGKFSVFLILLLMLTLVVAPKEKAEA.

As to quaternary structure, found in a complex with F(1)F(0) ATP synthase and SpoIIIJ and YqjG.

It localises to the secreted. The protein localises to the cell wall. This chain is Cell wall-binding protein YqgA (yqgA), found in Bacillus subtilis (strain 168).